We begin with the raw amino-acid sequence, 230 residues long: Leucyl/phenylalanyl-tRNA--protein transferase (230 aa).

It belongs to the L/F-transferase family.

The protein resides in the cytoplasm. It carries out the reaction N-terminal L-lysyl-[protein] + L-leucyl-tRNA(Leu) = N-terminal L-leucyl-L-lysyl-[protein] + tRNA(Leu) + H(+). The enzyme catalyses N-terminal L-arginyl-[protein] + L-leucyl-tRNA(Leu) = N-terminal L-leucyl-L-arginyl-[protein] + tRNA(Leu) + H(+). The catalysed reaction is L-phenylalanyl-tRNA(Phe) + an N-terminal L-alpha-aminoacyl-[protein] = an N-terminal L-phenylalanyl-L-alpha-aminoacyl-[protein] + tRNA(Phe). Its function is as follows. Functions in the N-end rule pathway of protein degradation where it conjugates Leu, Phe and, less efficiently, Met from aminoacyl-tRNAs to the N-termini of proteins containing an N-terminal arginine or lysine. In Proteus mirabilis (strain HI4320), this protein is Leucyl/phenylalanyl-tRNA--protein transferase.